The chain runs to 335 residues: S-adenosylmethionine:tRNA ribosyltransferase-isomerase (335 aa).

This sequence belongs to the QueA family. As to quaternary structure, monomer.

It localises to the cytoplasm. The catalysed reaction is 7-aminomethyl-7-carbaguanosine(34) in tRNA + S-adenosyl-L-methionine = epoxyqueuosine(34) in tRNA + adenine + L-methionine + 2 H(+). Its pathway is tRNA modification; tRNA-queuosine biosynthesis. In terms of biological role, transfers and isomerizes the ribose moiety from AdoMet to the 7-aminomethyl group of 7-deazaguanine (preQ1-tRNA) to give epoxyqueuosine (oQ-tRNA). This Thermosipho africanus (strain TCF52B) protein is S-adenosylmethionine:tRNA ribosyltransferase-isomerase.